We begin with the raw amino-acid sequence, 426 residues long: Phosphomethylpyrimidine synthase (426 aa).

Residues Asn-65, Met-94, Tyr-123, His-162, 184–186 (SRG), 225–228 (DGMR), and Glu-264 each bind substrate. His-268 lines the Zn(2+) pocket. Tyr-291 is a binding site for substrate. Position 332 (His-332) interacts with Zn(2+). The [4Fe-4S] cluster site is built by Cys-408, Cys-411, and Cys-415.

Belongs to the ThiC family. The cofactor is [4Fe-4S] cluster.

The enzyme catalyses 5-amino-1-(5-phospho-beta-D-ribosyl)imidazole + S-adenosyl-L-methionine = 4-amino-2-methyl-5-(phosphooxymethyl)pyrimidine + CO + 5'-deoxyadenosine + formate + L-methionine + 3 H(+). The protein operates within cofactor biosynthesis; thiamine diphosphate biosynthesis. Functionally, catalyzes the synthesis of the hydroxymethylpyrimidine phosphate (HMP-P) moiety of thiamine from aminoimidazole ribotide (AIR) in a radical S-adenosyl-L-methionine (SAM)-dependent reaction. This Methanococcus maripaludis (strain C6 / ATCC BAA-1332) protein is Phosphomethylpyrimidine synthase.